The following is a 62-amino-acid chain: Sec-independent protein translocase protein TatAc (62 aa).

The chain crosses the membrane as a helical span at residues 8–28 (ILVILFVGFLVFGPDKLPALG).

It belongs to the TatA/E family. In terms of assembly, forms a complex with TatC.

It localises to the cell membrane. Its function is as follows. Part of the twin-arginine translocation (Tat) system that transports large folded proteins containing a characteristic twin-arginine motif in their signal peptide across membranes. TatA could form the protein-conducting channel of the Tat system. This is Sec-independent protein translocase protein TatAc from Bacillus subtilis (strain 168).